The following is a 296-amino-acid chain: Phosphatidylglycerol--prolipoprotein diacylglyceryl transferase (296 aa).

A run of 4 helical transmembrane segments spans residues I10 to F30, L57 to Y77, V92 to L112, and L119 to G139. R140 is an a 1,2-diacyl-sn-glycero-3-phospho-(1'-sn-glycerol) binding site. Transmembrane regions (helical) follow at residues Q194–M214, Y220–V240, and W254–A274.

The protein belongs to the Lgt family.

It localises to the cell inner membrane. The enzyme catalyses L-cysteinyl-[prolipoprotein] + a 1,2-diacyl-sn-glycero-3-phospho-(1'-sn-glycerol) = an S-1,2-diacyl-sn-glyceryl-L-cysteinyl-[prolipoprotein] + sn-glycerol 1-phosphate + H(+). Its pathway is protein modification; lipoprotein biosynthesis (diacylglyceryl transfer). In terms of biological role, catalyzes the transfer of the diacylglyceryl group from phosphatidylglycerol to the sulfhydryl group of the N-terminal cysteine of a prolipoprotein, the first step in the formation of mature lipoproteins. The polypeptide is Phosphatidylglycerol--prolipoprotein diacylglyceryl transferase (Xanthomonas euvesicatoria pv. vesicatoria (strain 85-10) (Xanthomonas campestris pv. vesicatoria)).